The following is a 517-amino-acid chain: Diacylglycerol O-acyltransferase 1C (517 aa).

Residues 1–82 (MAISDVPAAA…NVGAAANDAG (82 aa)) form a disordered region. The segment covering 8-17 (AAAGTTATTT) has biased composition (low complexity). Positions 53-64 (ITDDDNIKDHKP) are enriched in basic and acidic residues. Positions 71–81 (DDNVGAAANDA) are enriched in low complexity. A run of 7 helical transmembrane segments spans residues 121–141 (HAGLFNLCIVVLVAVNSRLII), 165–185 (WPLFMCCLSLAIFPLAAFVVE), 197–217 (VVVLLHLIISTVELCYPVLVI), 222–242 (SAFVSGVTLMLLTCIVWLKLV), 272–292 (YPYTVTFRSLAYFMVAPTLCY), 305–325 (GWVFRQLVKLIIFTGVMGFII), and 361–381 (VWLCMFYCFFHLWLNILAELV). The FYXDWWN motif signature appears at 388-394 (FYKDWWN). 3 helical membrane passes run 429–449 (GAASLIAFLVSAVFHELCIAV), 451–471 (CHMFKLWAFIGIMFQVPLVLI), and 484–504 (VGNMIFWFIFCILGQPMSVLL). Residue His-443 is part of the active site.

The protein belongs to the membrane-bound acyltransferase family. Sterol o-acyltransferase subfamily.

Its subcellular location is the endoplasmic reticulum membrane. It catalyses the reaction an acyl-CoA + a 1,2-diacyl-sn-glycerol = a triacyl-sn-glycerol + CoA. The protein operates within glycerolipid metabolism; triacylglycerol biosynthesis. In terms of biological role, involved in triacylglycerol (TAG) synthesis. Catalyzes the acylation of the sn-3 hydroxy group of sn-1,2-diacylglycerol using acyl-CoA. The sequence is that of Diacylglycerol O-acyltransferase 1C from Glycine max (Soybean).